The sequence spans 585 residues: Glutathione S-transferase C-terminal domain-containing protein homolog (585 aa).

The GST C-terminal domain occupies 120–275 (LGFKGSCLLA…DKCARVLRDL (156 aa)).

It belongs to the GSTCD family.

This chain is Glutathione S-transferase C-terminal domain-containing protein homolog, found in Drosophila melanogaster (Fruit fly).